Here is a 95-residue protein sequence, read N- to C-terminus: Aspartyl/glutamyl-tRNA(Asn/Gln) amidotransferase subunit C (95 aa).

Belongs to the GatC family. In terms of assembly, heterotrimer of A, B and C subunits.

The catalysed reaction is L-glutamyl-tRNA(Gln) + L-glutamine + ATP + H2O = L-glutaminyl-tRNA(Gln) + L-glutamate + ADP + phosphate + H(+). It catalyses the reaction L-aspartyl-tRNA(Asn) + L-glutamine + ATP + H2O = L-asparaginyl-tRNA(Asn) + L-glutamate + ADP + phosphate + 2 H(+). In terms of biological role, allows the formation of correctly charged Asn-tRNA(Asn) or Gln-tRNA(Gln) through the transamidation of misacylated Asp-tRNA(Asn) or Glu-tRNA(Gln) in organisms which lack either or both of asparaginyl-tRNA or glutaminyl-tRNA synthetases. The reaction takes place in the presence of glutamine and ATP through an activated phospho-Asp-tRNA(Asn) or phospho-Glu-tRNA(Gln). The sequence is that of Aspartyl/glutamyl-tRNA(Asn/Gln) amidotransferase subunit C from Pseudomonas fluorescens (strain ATCC BAA-477 / NRRL B-23932 / Pf-5).